The primary structure comprises 697 residues: Elongation factor G (697 aa).

Positions 8 to 282 constitute a tr-type G domain; the sequence is EDYRNIGIMA…AVVDYLPSPL (275 aa). GTP contacts are provided by residues 17–24, 81–85, and 135–138; these read AHIDAGKT, DTPGH, and NKMD.

This sequence belongs to the TRAFAC class translation factor GTPase superfamily. Classic translation factor GTPase family. EF-G/EF-2 subfamily.

It localises to the cytoplasm. Functionally, catalyzes the GTP-dependent ribosomal translocation step during translation elongation. During this step, the ribosome changes from the pre-translocational (PRE) to the post-translocational (POST) state as the newly formed A-site-bound peptidyl-tRNA and P-site-bound deacylated tRNA move to the P and E sites, respectively. Catalyzes the coordinated movement of the two tRNA molecules, the mRNA and conformational changes in the ribosome. The protein is Elongation factor G of Mycoplasmopsis agalactiae (strain NCTC 10123 / CIP 59.7 / PG2) (Mycoplasma agalactiae).